A 207-amino-acid chain; its full sequence is Ribosomal RNA small subunit methyltransferase G (207 aa).

Residues Gly76, Gln81, 127–128, and Arg141 each bind S-adenosyl-L-methionine; that span reads VE.

It belongs to the methyltransferase superfamily. RNA methyltransferase RsmG family.

It localises to the cytoplasm. It catalyses the reaction guanosine(527) in 16S rRNA + S-adenosyl-L-methionine = N(7)-methylguanosine(527) in 16S rRNA + S-adenosyl-L-homocysteine. In terms of biological role, specifically methylates the N7 position of guanine in position 527 of 16S rRNA. The sequence is that of Ribosomal RNA small subunit methyltransferase G from Neisseria meningitidis serogroup C (strain 053442).